A 270-amino-acid polypeptide reads, in one-letter code: 3-phenylpropionate-dihydrodiol/cinnamic acid-dihydrodiol dehydrogenase (270 aa).

Residue Phe-10–Ala-34 coordinates NAD(+). Residue Ser-143 participates in substrate binding. Tyr-156 (proton acceptor) is an active-site residue.

This sequence belongs to the short-chain dehydrogenases/reductases (SDR) family.

It carries out the reaction 3-(cis-5,6-dihydroxycyclohexa-1,3-dien-1-yl)propanoate + NAD(+) = 3-(2,3-dihydroxyphenyl)propanoate + NADH + H(+). The enzyme catalyses (2E)-3-(cis-5,6-dihydroxycyclohexa-1,3-dien-1-yl)prop-2-enoate + NAD(+) = (2E)-3-(2,3-dihydroxyphenyl)prop-2-enoate + NADH + H(+). The protein operates within aromatic compound metabolism; 3-phenylpropanoate degradation. Functionally, converts 3-phenylpropionate-dihydrodiol (PP-dihydrodiol) and cinnamic acid-dihydrodiol (CI-dihydrodiol) into 3-(2,3-dihydroxylphenyl)propanoic acid (DHPP) and 2,3-dihydroxicinnamic acid (DHCI), respectively. The protein is 3-phenylpropionate-dihydrodiol/cinnamic acid-dihydrodiol dehydrogenase of Shigella flexneri serotype 5b (strain 8401).